We begin with the raw amino-acid sequence, 1234 residues long: ATP-dependent helicase/nuclease subunit A (1234 aa).

Positions threonine 2–threonine 475 constitute a UvrD-like helicase ATP-binding domain. An ATP-binding site is contributed by alanine 23–threonine 30. The region spanning tyrosine 507–glycine 806 is the UvrD-like helicase C-terminal domain.

The protein belongs to the helicase family. AddA subfamily. As to quaternary structure, heterodimer of AddA and AddB/RexB. Mg(2+) is required as a cofactor.

It catalyses the reaction Couples ATP hydrolysis with the unwinding of duplex DNA by translocating in the 3'-5' direction.. The catalysed reaction is ATP + H2O = ADP + phosphate + H(+). Functionally, the heterodimer acts as both an ATP-dependent DNA helicase and an ATP-dependent, dual-direction single-stranded exonuclease. Recognizes the chi site generating a DNA molecule suitable for the initiation of homologous recombination. The AddA nuclease domain is required for chi fragment generation; this subunit has the helicase and 3' -&gt; 5' nuclease activities. In Lacticaseibacillus paracasei (strain ATCC 334 / BCRC 17002 / CCUG 31169 / CIP 107868 / KCTC 3260 / NRRL B-441) (Lactobacillus paracasei), this protein is ATP-dependent helicase/nuclease subunit A.